Reading from the N-terminus, the 102-residue chain is NADH-quinone oxidoreductase subunit K (102 aa).

Helical transmembrane passes span 6–26 (MHHGLLLAAILFALGMIGILV), 30–50 (LIFILMSIEIMLNAAGLAFVV), and 64–84 (FIFILSVAAAEVSVGLALLLL).

It belongs to the complex I subunit 4L family. As to quaternary structure, NDH-1 is composed of 14 different subunits. Subunits NuoA, H, J, K, L, M, N constitute the membrane sector of the complex.

It is found in the cell inner membrane. The catalysed reaction is a quinone + NADH + 5 H(+)(in) = a quinol + NAD(+) + 4 H(+)(out). Functionally, NDH-1 shuttles electrons from NADH, via FMN and iron-sulfur (Fe-S) centers, to quinones in the respiratory chain. The immediate electron acceptor for the enzyme in this species is believed to be ubiquinone. Couples the redox reaction to proton translocation (for every two electrons transferred, four hydrogen ions are translocated across the cytoplasmic membrane), and thus conserves the redox energy in a proton gradient. This Nitrosospira multiformis (strain ATCC 25196 / NCIMB 11849 / C 71) protein is NADH-quinone oxidoreductase subunit K.